Reading from the N-terminus, the 223-residue chain is Peptidyl-prolyl cis-trans isomerase FKBP16-3, chloroplastic (223 aa).

The transit peptide at Met1 to Ile36 directs the protein to the chloroplast. The N-terminal 40 residues, Ala37–Ala76, are a transit peptide targeting the thylakoid. The PPIase FKBP-type domain occupies Gly124–Pro216.

It belongs to the FKBP-type PPIase family.

Its subcellular location is the plastid. It localises to the chloroplast thylakoid lumen. It carries out the reaction [protein]-peptidylproline (omega=180) = [protein]-peptidylproline (omega=0). In terms of biological role, PPIases accelerate the folding of proteins. It catalyzes the cis-trans isomerization of proline imidic peptide bonds in oligopeptides. The sequence is that of Peptidyl-prolyl cis-trans isomerase FKBP16-3, chloroplastic (FKBP16-3) from Arabidopsis thaliana (Mouse-ear cress).